The following is a 217-amino-acid chain: Nuclear transcription factor Y subunit C-3 (217 aa).

A compositionally biased stretch (polar residues) spans 1 to 28 (MDQQGQSSAMNYGSNPYQTNAMTTTPTG). Disordered stretches follow at residues 1–29 (MDQQGQSSAMNYGSNPYQTNAMTTTPTGS) and 198–217 (PYMGQPMWQQPGPEQQDPDN).

The protein belongs to the NFYC/HAP5 subunit family. As to quaternary structure, heterotrimeric transcription factor composed of three components, NF-YA, NF-YB and NF-YC. NF-YB and NF-YC must interact and dimerize for NF-YA association and DNA binding. In terms of tissue distribution, ubiquitous.

The protein resides in the nucleus. Its function is as follows. Stimulates the transcription of various genes by recognizing and binding to a CCAAT motif in promoters. The chain is Nuclear transcription factor Y subunit C-3 (NFYC3) from Arabidopsis thaliana (Mouse-ear cress).